The following is a 221-amino-acid chain: UPF0319 protein NTHI1987 (221 aa).

Residues 1–21 (MKLRAVVLGLATLCTSTATFA) form the signal peptide.

Belongs to the UPF0319 family.

The protein is UPF0319 protein NTHI1987 of Haemophilus influenzae (strain 86-028NP).